Here is a 157-residue protein sequence, read N- to C-terminus: MKILYPGTFDPLTNGHLDLIERAEKIFGNLVVAVLENTSKTPTFNLERRIIQIKYSLSHLPNIEIISYSGLTVDCANDLKANLILRGLRAMSDFEYELQIAHTNKSLNNDIETIFLSTNTNYSFLSSSLVKEVAKFGGEINHMVPPSVEKDLKEYFK.

A substrate-binding site is contributed by Thr8. ATP-binding positions include 8 to 9 (TF) and His16. Lys40, Thr72, and Arg86 together coordinate substrate. ATP is bound by residues 87–89 (GLR), Glu97, and 122–128 (YSFLSSS).

Belongs to the bacterial CoaD family. As to quaternary structure, homohexamer. It depends on Mg(2+) as a cofactor.

It localises to the cytoplasm. It catalyses the reaction (R)-4'-phosphopantetheine + ATP + H(+) = 3'-dephospho-CoA + diphosphate. The protein operates within cofactor biosynthesis; coenzyme A biosynthesis; CoA from (R)-pantothenate: step 4/5. In terms of biological role, reversibly transfers an adenylyl group from ATP to 4'-phosphopantetheine, yielding dephospho-CoA (dPCoA) and pyrophosphate. This is Phosphopantetheine adenylyltransferase from Prochlorococcus marinus (strain MIT 9312).